A 262-amino-acid polypeptide reads, in one-letter code: UPF0739 protein C1orf74 homolog (262 aa).

This sequence belongs to the UPF0739 family.

In Xenopus laevis (African clawed frog), this protein is UPF0739 protein C1orf74 homolog.